The chain runs to 637 residues: Biosynthetic arginine decarboxylase (637 aa).

The residue at position 110 (Lys110) is an N6-(pyridoxal phosphate)lysine. Residue 290–300 (IDVGGGLGVDY) coordinates substrate.

It belongs to the Orn/Lys/Arg decarboxylase class-II family. SpeA subfamily. Requires Mg(2+) as cofactor. Pyridoxal 5'-phosphate serves as cofactor.

The enzyme catalyses L-arginine + H(+) = agmatine + CO2. Its function is as follows. Catalyzes the biosynthesis of agmatine from arginine. This Pseudomonas putida (strain ATCC 47054 / DSM 6125 / CFBP 8728 / NCIMB 11950 / KT2440) protein is Biosynthetic arginine decarboxylase.